Consider the following 663-residue polypeptide: Transketolase 2 (663 aa).

H25 is a substrate binding site. Thiamine diphosphate contacts are provided by residues H65 and 113–115 (GPL). Mg(2+) is bound at residue D154. Residues G155 and N184 each contribute to the thiamine diphosphate site. Residues N184 and I186 each contribute to the Mg(2+) site. Residues H259, R356, and S383 each coordinate substrate. H259 serves as a coordination point for thiamine diphosphate. The active-site Proton donor is E410. F436 serves as a coordination point for thiamine diphosphate. Positions 460, 468, and 519 each coordinate substrate.

Belongs to the transketolase family. Homodimer. It depends on Mg(2+) as a cofactor. Requires Ca(2+) as cofactor. The cofactor is Mn(2+). Co(2+) is required as a cofactor. Thiamine diphosphate serves as cofactor.

It catalyses the reaction D-sedoheptulose 7-phosphate + D-glyceraldehyde 3-phosphate = aldehydo-D-ribose 5-phosphate + D-xylulose 5-phosphate. In terms of biological role, catalyzes the transfer of a two-carbon ketol group from a ketose donor to an aldose acceptor, via a covalent intermediate with the cofactor thiamine pyrophosphate. This is Transketolase 2 (tkt2) from Vibrio vulnificus (strain CMCP6).